The chain runs to 326 residues: Ornithine carbamoyltransferase (326 aa).

Carbamoyl phosphate contacts are provided by residues 54 to 57, glutamine 81, arginine 105, and 132 to 135; these read STRT and HPTQ. L-ornithine contacts are provided by residues asparagine 164, aspartate 225, and 229-230; that span reads SM. Carbamoyl phosphate is bound by residues 266 to 267 and arginine 311; that span reads CL.

The protein belongs to the aspartate/ornithine carbamoyltransferase superfamily. OTCase family.

It is found in the cytoplasm. It carries out the reaction carbamoyl phosphate + L-ornithine = L-citrulline + phosphate + H(+). Its pathway is amino-acid biosynthesis; L-arginine biosynthesis; L-arginine from L-ornithine and carbamoyl phosphate: step 1/3. Functionally, reversibly catalyzes the transfer of the carbamoyl group from carbamoyl phosphate (CP) to the N(epsilon) atom of ornithine (ORN) to produce L-citrulline. This Streptococcus mutans serotype c (strain ATCC 700610 / UA159) protein is Ornithine carbamoyltransferase (argF).